The primary structure comprises 292 residues: Protease HtpX (292 aa).

Transmembrane regions (helical) follow at residues 5-25 (VVLFLLTNFAVLILAGIVMSV) and 35-55 (GLLVMAAIFGFGGSFISLLLS). H140 contacts Zn(2+). Residue E141 is part of the active site. H144 lines the Zn(2+) pocket. Transmembrane regions (helical) follow at residues 155 to 175 (LLQGVLNTFVIVLARVVGGII) and 193 to 213 (IIVFVLEMVFGLFATMIAMWF). E218 contributes to the Zn(2+) binding site.

Belongs to the peptidase M48B family. Zn(2+) serves as cofactor.

It localises to the cell inner membrane. This is Protease HtpX from Xanthomonas campestris pv. campestris (strain 8004).